Here is a 481-residue protein sequence, read N- to C-terminus: MNEVAIVKEGWLHKRGEYIKTWRPRYFLLKSDGTFIGYKERPQDVDQLETPLNNFSVAKCQLMKTERPKPNTFIIRCLQWTTVIERTFHVDSPEEREEWIQVIQHVADNLKKQEEEMMEVRSGDSPSDNSGAEEMEVSHSKPKHKVTMNEFEYLKLLGKGTFGKVILVKEKATGRYYAMKILKKEVIVAKDEVAHTLTENRVLQNSRHPFLTALKYSFQTHDRLCFVMEYANGGELFFHLSRERIFSEDRARFYGAEIVSALDYLHSEKNVVYRDLKLENLMLDKDGHIKITDFGLCKEGIKDGATMKTFCGTPEYLAPEVLEDNDYGRAVDWWGLGVVMYEMMCGRLPFYNQDHEKLFELILMEEIRFPRTLLPEAKSLLSGLLKKDPKQRLGGGPDDAKEIMQHKFFAGIVWQDVYEKKLVPPFKPQVTSETDTRYFDEEFTAQMITITPPDQDDNFEFVDNERRPHFPQFSYSASGNA.

One can recognise a PH domain in the interval 5 to 108 (AIVKEGWLHK…WIQVIQHVAD (104 aa)). Residues 120-141 (VRSGDSPSDNSGAEEMEVSHSK) are disordered. O-linked (GlcNAc) serine glycosylation is found at S127 and S130. Positions 151 to 409 (FEYLKLLGKG…AKEIMQHKFF (259 aa)) constitute a Protein kinase domain. ATP contacts are provided by residues 157-165 (LGKGTFGKV) and K180. D275 serves as the catalytic Proton acceptor. O-linked (GlcNAc) threonine glycosylation is present at T306. T309 bears the Phosphothreonine; by PDPK1 mark. O-linked (GlcNAc) threonine glycosylation occurs at T313. The region spanning 410–481 (AGIVWQDVYE…QFSYSASGNA (72 aa)) is the AGC-kinase C-terminal domain. The residue at position 474 (S474) is a Phosphoserine. O-linked (GlcNAc) serine; alternate glycosylation occurs at S474. Residue Y475 is modified to Phosphotyrosine.

It belongs to the protein kinase superfamily. AGC Ser/Thr protein kinase family. RAC subfamily. Post-translationally, cleavage by caspase-3/CASP3. Cleaved at the caspase-3 consensus site Asp-463 during apoptosis, resulting in down-regulation of the AKT signaling pathway and decreased cell survival. Phosphorylation on Thr-309 and Ser-474 is required for full activity. Phosphorylation of the activation loop at Thr-309 by PDPK1/PDK1 is a prerequisite for full activation. Phosphorylation by mTORC2 at Ser-474 in response to growth factors plays a key role in AKT1 activation by facilitating subsequent phosphorylation of the activation loop by PDPK1/PDK1. As to expression, expressed in the oocyte.

It is found in the cytoplasm. Its subcellular location is the nucleus. It catalyses the reaction L-seryl-[protein] + ATP = O-phospho-L-seryl-[protein] + ADP + H(+). The enzyme catalyses L-threonyl-[protein] + ATP = O-phospho-L-threonyl-[protein] + ADP + H(+). With respect to regulation, activated in response to insulin. Three specific sites, one in the kinase domain (Thr-309) and the two other ones in the C-terminal regulatory region (Ser-474 and Tyr-475), need to be phosphorylated for its full activation. Functionally, AKT1 is one of several closely related serine/threonine-protein kinases known as the AKT kinase, and which regulate many processes including metabolism, proliferation, cell survival, growth and angiogenesis. This is mediated through serine and/or threonine phosphorylation of a range of downstream substrates. Over 100 substrate candidates have been reported so far, but for most of them, no isoform specificity has been reported. Signals downstream of phosphatidylinositol 3-kinase (PI(3)K) to mediate the effects of various growth factors such as platelet-derived growth factor (PDGF), epidermal growth factor (EGF), insulin and insulin-like growth factor 1 (IGF1). Plays a role as a key modulator of the AKT-mTOR signaling pathway controlling the tempo of the process of newborn neurons integration during adult neurogenesis, including correct neuron positioning, dendritic development and synapse formation. Plays a role in glucose transport by mediating insulin-induced translocation of the GLUT4 glucose transporter to the cell surface. Mediates the antiapoptotic effects of IGF1. Mediates insulin-stimulated protein synthesis, partly by playing a role in both insulin-induced phosphorylation of 4E-BP1 and in insulin-induced activation of p70 S6 kinase. Promotes glycogen synthesis by mediating the insulin-induced activation of glycogen synthase. Required for insulin-stimulated meiotic reinitiation during oocyte maturation. May be involved in the regulation of vesicular functions such as preciliary trafficking and endocytic recycling. This chain is RAC-alpha serine/threonine-protein kinase, found in Xenopus laevis (African clawed frog).